A 96-amino-acid chain; its full sequence is Co-chaperonin GroES (96 aa).

The protein belongs to the GroES chaperonin family. As to quaternary structure, heptamer of 7 subunits arranged in a ring. Interacts with the chaperonin GroEL.

Its subcellular location is the cytoplasm. Its function is as follows. Together with the chaperonin GroEL, plays an essential role in assisting protein folding. The GroEL-GroES system forms a nano-cage that allows encapsulation of the non-native substrate proteins and provides a physical environment optimized to promote and accelerate protein folding. GroES binds to the apical surface of the GroEL ring, thereby capping the opening of the GroEL channel. The chain is Co-chaperonin GroES from Polaromonas naphthalenivorans (strain CJ2).